The following is a 307-amino-acid chain: Undecaprenyl-diphosphatase 2 (307 aa).

The next 8 helical transmembrane spans lie at 19–41 (GVTE…IIGF), 56–76 (IHMF…VLYW), 117–137 (FKFW…GLPF), 144–164 (LLFF…WMIF), 208–228 (IIGA…SFFL), 229–249 (AIPM…VVLS), 251–271 (VQIL…LVVV), and 285–305 (IFAV…FTKV).

Belongs to the UppP family.

It localises to the cell membrane. The catalysed reaction is di-trans,octa-cis-undecaprenyl diphosphate + H2O = di-trans,octa-cis-undecaprenyl phosphate + phosphate + H(+). Functionally, catalyzes the dephosphorylation of undecaprenyl diphosphate (UPP). Confers resistance to bacitracin. The polypeptide is Undecaprenyl-diphosphatase 2 (Clostridium acetobutylicum (strain ATCC 824 / DSM 792 / JCM 1419 / IAM 19013 / LMG 5710 / NBRC 13948 / NRRL B-527 / VKM B-1787 / 2291 / W)).